The primary structure comprises 268 residues: Phosphatidylglycerol--prolipoprotein diacylglyceryl transferase (268 aa).

4 consecutive transmembrane segments (helical) span residues 14–34 (LGPI…FAGW), 57–77 (LTFY…IIFY), 90–110 (FFLW…LIAF), and 117–137 (IGAN…IGLG). Arg140 contributes to the a 1,2-diacyl-sn-glycero-3-phospho-(1'-sn-glycerol) binding site. The next 3 membrane-spanning stretches (helical) occupy residues 174-194 (QLFE…LVTI), 200-220 (YLVL…CEFF), and 238-258 (GQIL…AVFI).

This sequence belongs to the Lgt family.

It localises to the cell inner membrane. The catalysed reaction is L-cysteinyl-[prolipoprotein] + a 1,2-diacyl-sn-glycero-3-phospho-(1'-sn-glycerol) = an S-1,2-diacyl-sn-glyceryl-L-cysteinyl-[prolipoprotein] + sn-glycerol 1-phosphate + H(+). The protein operates within protein modification; lipoprotein biosynthesis (diacylglyceryl transfer). In terms of biological role, catalyzes the transfer of the diacylglyceryl group from phosphatidylglycerol to the sulfhydryl group of the N-terminal cysteine of a prolipoprotein, the first step in the formation of mature lipoproteins. This Francisella tularensis subsp. holarctica (strain FTNF002-00 / FTA) protein is Phosphatidylglycerol--prolipoprotein diacylglyceryl transferase.